Here is a 110-residue protein sequence, read N- to C-terminus: Large ribosomal subunit protein uL22 (110 aa).

The protein belongs to the universal ribosomal protein uL22 family. Part of the 50S ribosomal subunit.

In terms of biological role, this protein binds specifically to 23S rRNA; its binding is stimulated by other ribosomal proteins, e.g. L4, L17, and L20. It is important during the early stages of 50S assembly. It makes multiple contacts with different domains of the 23S rRNA in the assembled 50S subunit and ribosome. The globular domain of the protein is located near the polypeptide exit tunnel on the outside of the subunit, while an extended beta-hairpin is found that lines the wall of the exit tunnel in the center of the 70S ribosome. This chain is Large ribosomal subunit protein uL22, found in Idiomarina loihiensis (strain ATCC BAA-735 / DSM 15497 / L2-TR).